The primary structure comprises 580 residues: Peptidyl-prolyl cis-trans isomerase-like 2 (580 aa).

Residues 42–115 (KRLPFRFCSL…GEYIDPVTYK (74 aa)) enclose the U-box domain. Disordered stretches follow at residues 182 to 201 (IKEG…EDPS), 227 to 259 (QERA…SYQS), 439 to 459 (SPTL…RPTP), 479 to 530 (QKKQ…SSTT), and 553 to 580 (FVDE…SSWD). The PPIase cyclophilin-type domain maps to 309–468 (QKGYARISTT…PDIRIVDVTI (160 aa)). The span at 439 to 457 (SPTLNKLETHPVNPTTNRP) shows a compositional bias: polar residues. Positions 490 to 507 (EANRTAENDEEGSRRAED) are enriched in basic and acidic residues.

Belongs to the cyclophilin-type PPIase family. PPIL2 subfamily.

It localises to the nucleus. The catalysed reaction is [protein]-peptidylproline (omega=180) = [protein]-peptidylproline (omega=0). It catalyses the reaction S-ubiquitinyl-[E2 ubiquitin-conjugating enzyme]-L-cysteine + [acceptor protein]-L-lysine = [E2 ubiquitin-conjugating enzyme]-L-cysteine + N(6)-ubiquitinyl-[acceptor protein]-L-lysine.. Its pathway is protein modification; protein ubiquitination. Functionally, may catalyze the cis-trans isomerization of proline imidic peptide bonds in oligopeptides thereby assisting the folding of proteins. May also function as a chaperone, playing a role in intracellular transport of proteins. May also have a protein ubiquitin ligase activity acting as an E3 ubiquitin protein ligase or as a ubiquitin-ubiquitin ligase promoting elongation of ubiquitin chains on proteins. This chain is Peptidyl-prolyl cis-trans isomerase-like 2 (cyp8), found in Emericella nidulans (strain FGSC A4 / ATCC 38163 / CBS 112.46 / NRRL 194 / M139) (Aspergillus nidulans).